Consider the following 4749-residue polypeptide: Dynein heavy chain domain-containing protein 1 (4749 aa).

The segment covering 1-18 has biased composition (low complexity); the sequence is MKPHSQTSPPSLPMPSTS. Disordered regions lie at residues 1–27, 275–308, and 2690–2785; these read MKPHSQTSPPSLPMPSTSCRPGQTQKP, ESSDTEQAEGEPAGRKLQVASEAPEEKALKKKSS, and ESLA…KLQS. Positions 2696–2716 are enriched in acidic residues; the sequence is CEEEEVEEEKVPEVESEEEIA. Residues 2738-2749 are compositionally biased toward polar residues; that stretch reads QATTGSFLSENS. Residues 3197–3224 adopt a coiled-coil conformation; it reads CQHQESLIENLVRQHDALKAQQEVFLEQ. Residues 3568 to 3667 are disordered; that stretch reads PPKQNRSLEP…SLPSCLTVLS (100 aa). The segment covering 3578-3593 has biased composition (basic and acidic residues); that stretch reads SPKESKEKFHVTKQDS. The stretch at 3594 to 3636 forms a coiled coil; the sequence is GDNTEDELEDENNEEEDEANEQRKEQKAEENKIQGENEQEVQE. Acidic residues predominate over residues 3595 to 3612; that stretch reads DNTEDELEDENNEEEDEA. The span at 3613-3628 shows a compositional bias: basic and acidic residues; it reads NEQRKEQKAEENKIQG. Low complexity predominate over residues 3644–3655; sequence ESSGSHSSLPSE. The segment covering 3656 to 3667 has biased composition (polar residues); it reads TQSLPSCLTVLS. 2 coiled-coil regions span residues 3818 to 3838 and 4431 to 4451; these read MVRTQAKICQLNAQMEELEDQ and ERQLQQRLAQAKKRLVALQAL.

It belongs to the dynein heavy chain family. In terms of tissue distribution, expressed in spermatozoa (at protein level).

It localises to the cell projection. The protein resides in the cilium. It is found in the flagellum. Its function is as follows. Essential for the normal function of sperm flagella axonemes. The sequence is that of Dynein heavy chain domain-containing protein 1 (Dnhd1) from Mus musculus (Mouse).